Here is a 432-residue protein sequence, read N- to C-terminus: Sonic hedgehog protein (432 aa).

The N-terminal stretch at 1–26 (MDEMILLRRVLLAGFICALLVPSGLS) is a signal peptide. Cys27 carries N-palmitoyl cysteine lipidation. The Cardin-Weintraub motif lies at 35 to 41 (TRKRFKK). Glu92, Glu93, Asp98, Thr128, Glu129, Asp132, and Asp134 together coordinate Ca(2+). 3 residues coordinate Zn(2+): His143, Asp150, and His185. The Cholesterol glycine ester moiety is linked to residue Gly200.

Belongs to the hedgehog family. In terms of assembly, interacts with HHATL/GUP1 which negatively regulates HHAT-mediated palmitoylation of the SHH N-terminus. Interacts with BOC and CDON. Interacts with HHIP. Interacts with DISP1 via its cholesterol anchor. Interacts with SCUBE2. Multimer. The C-terminal domain displays an autoproteolysis activity and a cholesterol transferase activity. Both activities result in the cleavage of the full-length protein and covalent attachment of a cholesterol moiety to the C-terminal of the newly generated N-terminal fragment (ShhN). Cholesterylation is required for the sonic hedgehog protein N-product targeting to lipid rafts and multimerization. ShhN is the active species in both local and long-range signaling, whereas the C-product (ShhC) is degraded in the reticulum endoplasmic. In terms of processing, N-palmitoylation by HHAT of ShhN is required for sonic hedgehog protein N-product multimerization and full activity. It is a prerequisite for the membrane-proximal positioning and the subsequent shedding of this N-terminal peptide. Post-translationally, the lipidated N- and C-terminal peptides of ShhNp can be cleaved (shedding). The N-terminal palmitoylated peptide is cleaved at the Cardin-Weintraub (CW) motif site. The cleavage reduced the interactions with heparan sulfate. The cleavage is enhanced by SCUBE2.

It is found in the endoplasmic reticulum membrane. It localises to the golgi apparatus membrane. The protein resides in the cell membrane. It catalyses the reaction glycyl-L-cysteinyl-[protein] + cholesterol + H(+) = [protein]-C-terminal glycyl cholesterol ester + N-terminal L-cysteinyl-[protein]. Functionally, the C-terminal part of the sonic hedgehog protein precursor displays an autoproteolysis and a cholesterol transferase activity. Both activities result in the cleavage of the full-length protein into two parts (ShhN and ShhC) followed by the covalent attachment of a cholesterol moiety to the C-terminal of the newly generated ShhN. Both activities occur in the endoplasmic reticulum. Once cleaved, ShhC is degraded in the endoplasmic reticulum. Its function is as follows. The dually lipidated sonic hedgehog protein N-product (ShhNp) is a morphogen which is essential for a variety of patterning events during development. Induces ventral cell fate in the neural tube and somites. Involved in the patterning of the anterior-posterior axis of the developing limb bud. Essential for axon guidance. Binds to the patched (PTCH1) receptor, which functions in association with smoothened (SMO), to activate the transcription of target genes. In the absence of SHH, PTCH1 represses the constitutive signaling activity of SMO. This Cynops pyrrhogaster (Japanese fire-bellied newt) protein is Sonic hedgehog protein.